The chain runs to 352 residues: [Citrate [pro-3S]-lyase] ligase (352 aa).

An N-acetyltransferase domain is found at 1–128 (MFGNDIFTRV…VMVLMENSAT (128 aa)).

It carries out the reaction holo-[citrate lyase ACP] + acetate + ATP = acetyl-[citrate lyase ACP] + AMP + diphosphate. Functionally, acetylation of prosthetic group (2-(5''-phosphoribosyl)-3'-dephosphocoenzyme-A) of the gamma subunit of citrate lyase. The sequence is that of [Citrate [pro-3S]-lyase] ligase (citC) from Escherichia coli (strain K12).